Here is an 81-residue protein sequence, read N- to C-terminus: Styelin-E (81 aa).

The signal sequence occupies residues 1 to 22 (MQMKATILIVLVALFMIQQSEA). The residue at position 24 (Trp-24) is a 6'-bromotryptophan. The residue at position 26 (Arg-26) is a 3,4-dihydroxyarginine. Lys-27, Lys-30, and Lys-34 each carry 4,5-dihydroxylysine. 3',4'-dihydroxyphenylalanine occurs at positions 36 and 37. The residue at position 38 (Lys-38) is a 4,5-dihydroxylysine. The residue at position 40 (Lys-40) is a 5-hydroxylysine. Residues Tyr-41 and Tyr-42 each carry the 3',4'-dihydroxyphenylalanine modification. The residue at position 44 (Lys-44) is a 5-hydroxylysine. Leu-54 is modified (leucine amide). A propeptide spans 56–81 (DMTDEEFQDFMKEVEQAREEELQSRQ) (removed in mature form).

Post-translationally, contains L-DOPA (3',4'-dihydroxyphenylalanine). Hemocytes and pharyngeal tissues.

The protein localises to the secreted. Functionally, bactericidal against several Gram-positive and Gram-negative bacteria. This Styela clava (Sea squirt) protein is Styelin-E.